A 2148-amino-acid polypeptide reads, in one-letter code: Polyketide synthase 1 (2148 aa).

The N-terminal acylcarrier protein transacylase domain (SAT) stretch occupies residues 19-261 (FIFGDQSSCN…TPLAVHAPYH (243 aa)). One can recognise a Ketosynthase family 3 (KS3) domain in the interval 394 to 829 (ESKIAIIGMS…GGNTALLVED (436 aa)). Catalysis depends on for beta-ketoacyl synthase activity residues Cys-566, His-701, and His-745. The tract at residues 929 to 1233 (AFVFSGQGSQ…PSLMRNKDGW (305 aa)) is malonyl-CoA:ACP transacylase (MAT) domain. The For acyl/malonyl transferase activity role is filled by Ser-1018. The segment at 1310–1624 (TASVHRIVHE…RKVLNTAMPP (315 aa)) is product template (PT) domain. The N-terminal hotdog fold stretch occupies residues 1314–1447 (HRIVHESVEK…SSLHFEQPKV (134 aa)). The PKS/mFAS DH domain maps to 1314–1619 (HRIVHESVEK…FQGIPRKVLN (306 aa)). The active-site Proton acceptor; for dehydratase activity is His-1346. Positions 1474 to 1619 (LNSRMSSGVI…FQGIPRKVLN (146 aa)) are C-terminal hotdog fold. Asp-1533 acts as the Proton donor; for dehydratase activity in catalysis. Residues 1619–1655 (NTAMPPPKSQNEAPVRSGPAKPAVKPPRSASSEHSGH) form a disordered region. Residues 1678-1752 (RNPMLPVFKI…DLAAHLGMDT (75 aa)) enclose the Carrier 1 domain. At Ser-1712 the chain carries O-(pantetheine 4'-phosphoryl)serine. Positions 1755 to 1790 (ADQSSGQSSSSGGLSPRSDSIGEMTSSATTPPSMSP) are enriched in low complexity. The interval 1755 to 1796 (ADQSSGQSSSSGGLSPRSDSIGEMTSSATTPPSMSPRGSVSG) is disordered. One can recognise a Carrier 2 domain in the interval 1793 to 1870 (SVSGSQCKDV…SFKHMFQQGH (78 aa)). Ser-1830 is subject to O-(pantetheine 4'-phosphoryl)serine. The segment at 1882–2146 (LKQYRATSTL…ERVAAFIRSI (265 aa)) is thioesterase (TE) domain. The active-site For thioesterase activity is Ser-1973.

Polyketide synthase; part of the Pks1 gene cluster that mediates the biosynthesis of an anthraquinone derivative pigment that contributes to conidial pigmentation that provides protection from UV radiation, heat and cold stress. The polyketide synthase Pks1 produces 1-acetyl-2,4,6,8-tetrahydroxy-9,10-anthraquinone though condensation of acetyl-CoA with malonyl-CoA. The dehydratase EthD and the laccase Mlac1 further convert the anthraquinone derivative into the final conidial pigment. This chain is Polyketide synthase 1, found in Metarhizium brunneum (strain ARSEF 3297).